The following is a 283-amino-acid chain: tRNA-cytidine(32) 2-sulfurtransferase (283 aa).

A PP-loop motif motif is present at residues 32-37 (SGGKDS). Positions 107, 110, and 198 each coordinate [4Fe-4S] cluster.

The protein belongs to the TtcA family. As to quaternary structure, homodimer. The cofactor is Mg(2+). [4Fe-4S] cluster serves as cofactor.

Its subcellular location is the cytoplasm. It carries out the reaction cytidine(32) in tRNA + S-sulfanyl-L-cysteinyl-[cysteine desulfurase] + AH2 + ATP = 2-thiocytidine(32) in tRNA + L-cysteinyl-[cysteine desulfurase] + A + AMP + diphosphate + H(+). It functions in the pathway tRNA modification. Its function is as follows. Catalyzes the ATP-dependent 2-thiolation of cytidine in position 32 of tRNA, to form 2-thiocytidine (s(2)C32). The sulfur atoms are provided by the cysteine/cysteine desulfurase (IscS) system. This chain is tRNA-cytidine(32) 2-sulfurtransferase, found in Sorangium cellulosum (strain So ce56) (Polyangium cellulosum (strain So ce56)).